The primary structure comprises 311 residues: uncharacterized protein (311 aa).

The next 9 membrane-spanning stretches (helical) occupy residues 11 to 31 (LDNW…GYLS), 34 to 54 (VGIV…FLSL), 72 to 92 (LAIS…LFGI), 101 to 121 (HVIV…FVAQ), 147 to 167 (IEGI…WYLM), 198 to 218 (WFGV…FALS), 233 to 253 (GFIA…SIVI), 257 to 277 (FALA…TYLL), and 279 to 299 (TIPF…NVGP).

Its subcellular location is the cell membrane. This is an uncharacterized protein from Mycoplasma pneumoniae (strain ATCC 29342 / M129 / Subtype 1) (Mycoplasmoides pneumoniae).